Reading from the N-terminus, the 369-residue chain is NAD-dependent epimerase/dehydratase FUM13 (369 aa).

Position 176 (Y176) interacts with NADP(+).

Belongs to the NAD(P)-dependent epimerase/dehydratase family. Dihydroflavonol-4-reductase subfamily.

The protein operates within mycotoxin biosynthesis. Functionally, NAD-dependent epimerase/dehydratase; part of the gene cluster that mediates the biosynthesis of fumonisins B1 (FB1), B2 (FB2), B3 (FB3), and B4 (FB4), which are carcinogenic mycotoxins. Within the pathway, FUM13 stereospecifically reduces the intermediate 3-keto intermediate 2-amino-3-oxo-12,16-dimethylicosane to the 3-hydroxyl product 2-amino-3-hydroxy-12,16-dimethylicosane. The biosynthesis starts with the FUM1-catalyzed carbon chain assembly from one molecule of acetyl-CoA, eight molecules of malonyl-CoA, and two molecules of methionine (in S-adenosyl form). The C18 polyketide chain is released from the enzyme by a nucleophilic attack of a carbanion, which is derived from R-carbon of alanine by decarboxylation, on the carbonyl carbon of polyketide acyl chain. This step is catalyzed by the pyridoxal 5'-phosphate-dependent aminoacyl transferase FUM8. The resultant 3-keto intermediate is then stereospecifically reduced to a 3-hydroxyl product by reductase FUM13. Subsequent oxidations at C-10 by the cytochrome P450 monooxygenase FUM2, C-14 and C-15 by FUM6, FUM12 or FUM15, tricarballylic esterification of the hydroxyl groups on C-14 and C-15 by acyltransferase FUM14, and C-5 hydroxylation by 2-keto-glutarate-dependent dioxygenase FUM3 furnish the biosynthesis of fumonisins. The tricarballylic moieties are most likely derived from the citric acid cycle, and their addition to the carbon backbone may involve FUM7, FUM10, FUM11 and FUM14. The chain is NAD-dependent epimerase/dehydratase FUM13 from Gibberella moniliformis (strain M3125 / FGSC 7600) (Maize ear and stalk rot fungus).